We begin with the raw amino-acid sequence, 98 residues long: Prostate and testis expressed protein 3 (98 aa).

The N-terminal stretch at 1–20 (MNKHFLFLFLLYCLIVAVTS) is a signal peptide. The UPAR/Ly6 domain occupies 21–97 (LQCITCHLRT…CCNYNYCNFK (77 aa)). 4 disulfide bridges follow: Cys23/Cys50, Cys26/Cys35, Cys42/Cys68, and Cys72/Cys88.

It belongs to the PATE family. In terms of tissue distribution, specifically expressed in prostate and testis.

It localises to the secreted. This is Prostate and testis expressed protein 3 (PATE3) from Homo sapiens (Human).